The chain runs to 144 residues: Cytochrome c oxidase subunit 4 isoform 1, mitochondrial (144 aa).

Residues 1–73 are Mitochondrial matrix-facing; it reads SVVKSEDFTL…SFAEMNRRSN (73 aa). Lysine 4 is modified (N6-acetyllysine; alternate). Position 4 is an N6-succinyllysine; alternate (lysine 4). Lysine 28 carries the N6-acetyllysine modification. Phosphoserine occurs at positions 31 and 33. Lysine 35 bears the N6-acetyllysine; alternate mark. Lysine 35 carries the N6-succinyllysine; alternate modification. N6-acetyllysine is present on lysine 42. Residues 74 to 99 traverse the membrane as a helical segment; the sequence is EWKTVVGTAMFFFGITALIVMWEKRY. Topologically, residues 100 to 144 are mitochondrial intermembrane; that stretch reads VYGPLPQTFDKEWVAMQTKRMLDMKVNPIQGLASKWDYEKNEWKK.

The protein belongs to the cytochrome c oxidase IV family. Component of the cytochrome c oxidase (complex IV, CIV), a multisubunit enzyme composed of 14 subunits. The complex is composed of a catalytic core of 3 subunits MT-CO1, MT-CO2 and MT-CO3, encoded in the mitochondrial DNA, and 11 supernumerary subunits COX4I, COX5A, COX5B, COX6A, COX6B, COX6C, COX7A, COX7B, COX7C, COX8 and NDUFA4, which are encoded in the nuclear genome. The complex exists as a monomer or a dimer and forms supercomplexes (SCs) in the inner mitochondrial membrane with NADH-ubiquinone oxidoreductase (complex I, CI) and ubiquinol-cytochrome c oxidoreductase (cytochrome b-c1 complex, complex III, CIII), resulting in different assemblies (supercomplex SCI(1)III(2)IV(1) and megacomplex MCI(2)III(2)IV(2)). Interacts with PHB2; the interaction decreases in absence of SPHK2. Interacts with AFG1L. Interacts with ABCB7; this interaction allows the regulation of cellular iron homeostasis and cellular reactive oxygen species (ROS) levels in cardiomyocytes. Interacts with FLVCR2; this interaction occurs in the absence of heme and is disrupted upon heme binding. Interacts with IRGC.

The protein resides in the mitochondrion inner membrane. The protein operates within energy metabolism; oxidative phosphorylation. Functionally, component of the cytochrome c oxidase, the last enzyme in the mitochondrial electron transport chain which drives oxidative phosphorylation. The respiratory chain contains 3 multisubunit complexes succinate dehydrogenase (complex II, CII), ubiquinol-cytochrome c oxidoreductase (cytochrome b-c1 complex, complex III, CIII) and cytochrome c oxidase (complex IV, CIV), that cooperate to transfer electrons derived from NADH and succinate to molecular oxygen, creating an electrochemical gradient over the inner membrane that drives transmembrane transport and the ATP synthase. Cytochrome c oxidase is the component of the respiratory chain that catalyzes the reduction of oxygen to water. Electrons originating from reduced cytochrome c in the intermembrane space (IMS) are transferred via the dinuclear copper A center (CU(A)) of subunit 2 and heme A of subunit 1 to the active site in subunit 1, a binuclear center (BNC) formed by heme A3 and copper B (CU(B)). The BNC reduces molecular oxygen to 2 water molecules using 4 electrons from cytochrome c in the IMS and 4 protons from the mitochondrial matrix. The protein is Cytochrome c oxidase subunit 4 isoform 1, mitochondrial (COX4I1) of Theropithecus gelada (Gelada baboon).